The sequence spans 141 residues: Large ribosomal subunit protein uL16 (141 aa).

It belongs to the universal ribosomal protein uL16 family. As to quaternary structure, part of the 50S ribosomal subunit.

Functionally, binds 23S rRNA and is also seen to make contacts with the A and possibly P site tRNAs. This chain is Large ribosomal subunit protein uL16, found in Geobacillus thermodenitrificans (strain NG80-2).